The following is a 576-amino-acid chain: Catalase-peroxidase (576 aa).

A cross-link (tryptophyl-tyrosyl-methioninium (Trp-Tyr) (with M-250)) is located at residues 95–224 (WHAAGSYRAA…LAAVQMGLIY (130 aa)). The Proton acceptor role is filled by His-96. The segment at residues 224 to 250 (YVNPEGVNGQPDPARTALHIRETFARM) is a cross-link (tryptophyl-tyrosyl-methioninium (Tyr-Met) (with W-95)). Heme b is bound at residue His-265.

Belongs to the peroxidase family. Peroxidase/catalase subfamily. Homotetramer. Requires heme b as cofactor. Post-translationally, formation of the three residue Trp-Tyr-Met cross-link is important for the catalase, but not the peroxidase activity of the enzyme.

It catalyses the reaction H2O2 + AH2 = A + 2 H2O. It carries out the reaction 2 H2O2 = O2 + 2 H2O. Bifunctional enzyme with both catalase and broad-spectrum peroxidase activity. Also displays NADH oxidase, INH lyase and isonicotinoyl-NAD synthase activities. Important for stationary phase survival. This Rhodobacter capsulatus (Rhodopseudomonas capsulata) protein is Catalase-peroxidase (katG).